Reading from the N-terminus, the 494-residue chain is Guanosine-5'-triphosphate,3'-diphosphate pyrophosphatase (494 aa).

The protein belongs to the GppA/Ppx family. GppA subfamily.

It catalyses the reaction guanosine 3'-diphosphate 5'-triphosphate + H2O = guanosine 3',5'-bis(diphosphate) + phosphate + H(+). It participates in purine metabolism; ppGpp biosynthesis; ppGpp from GTP: step 2/2. Functionally, catalyzes the conversion of pppGpp to ppGpp. Guanosine pentaphosphate (pppGpp) is a cytoplasmic signaling molecule which together with ppGpp controls the 'stringent response', an adaptive process that allows bacteria to respond to amino acid starvation, resulting in the coordinated regulation of numerous cellular activities. This chain is Guanosine-5'-triphosphate,3'-diphosphate pyrophosphatase, found in Shigella dysenteriae serotype 1 (strain Sd197).